The following is a 230-amino-acid chain: Porin OmpL (230 aa).

A signal peptide spans 1–20; that stretch reads MKSLNTLVILTSVISTSVFA.

This sequence belongs to the oligogalacturonate-specific porin KdgM (TC 1.B.35) family. OmpL subfamily.

Its subcellular location is the cell outer membrane. In terms of biological role, outer membrane channel protein that allows an efficient diffusion of low-molecular-weight solutes such as small sugars and tetraglycine. However, the specific substrate recognized by the OmpL channel is unknown. The sequence is that of Porin OmpL (ompL) from Salmonella typhimurium (strain LT2 / SGSC1412 / ATCC 700720).